A 273-amino-acid chain; its full sequence is Large ribosomal subunit protein uL2cz/uL2cy (273 aa).

2 disordered regions span residues 1–22 and 225–273; these read MAKH…DRQV and PVDH…RRRK.

It belongs to the universal ribosomal protein uL2 family. As to quaternary structure, part of the 50S ribosomal subunit.

Its subcellular location is the plastid. The protein localises to the chloroplast. This chain is Large ribosomal subunit protein uL2cz/uL2cy (rpl2-A), found in Zea mays (Maize).